A 146-amino-acid polypeptide reads, in one-letter code: UPF0178 protein BT9727_2823 (146 aa).

It belongs to the UPF0178 family.

The protein is UPF0178 protein BT9727_2823 of Bacillus thuringiensis subsp. konkukian (strain 97-27).